The following is a 198-amino-acid chain: Glycerol-3-phosphate acyltransferase (198 aa).

The next 5 membrane-spanning stretches (helical) occupy residues 2-22 (YAVLTAIIAYLIGCINNAYIF), 48-70 (LGYKAAAPVFALDVLKGVIAVLI), 75-97 (MGNTGAMIAGIAVVCGHNWPVFL), 111-131 (VVMTVSPLLGLIALAIGVTVI), and 154-174 (IFWNSTQIFIFSLILASLAIF).

Belongs to the PlsY family. In terms of assembly, probably interacts with PlsX.

It localises to the cell membrane. It catalyses the reaction an acyl phosphate + sn-glycerol 3-phosphate = a 1-acyl-sn-glycero-3-phosphate + phosphate. It participates in lipid metabolism; phospholipid metabolism. Functionally, catalyzes the transfer of an acyl group from acyl-phosphate (acyl-PO(4)) to glycerol-3-phosphate (G3P) to form lysophosphatidic acid (LPA). This enzyme utilizes acyl-phosphate as fatty acyl donor, but not acyl-CoA or acyl-ACP. The protein is Glycerol-3-phosphate acyltransferase of Thermoanaerobacter sp. (strain X514).